The following is a 124-amino-acid chain: Putative ankyrin repeat protein RF_1087 (124 aa).

ANK repeat units follow at residues 17-46 (NDQK…NPNI), 50-79 (NGET…IIDS), and 83-112 (FERT…TIGN).

This is Putative ankyrin repeat protein RF_1087 from Rickettsia felis (strain ATCC VR-1525 / URRWXCal2) (Rickettsia azadi).